A 372-amino-acid polypeptide reads, in one-letter code: tRNA-specific 2-thiouridylase MnmA (372 aa).

Residues 9 to 16 (GMSGGVDS) and M35 each bind ATP. An interaction with target base in tRNA region spans residues 95-97 (NPD). Residue C100 is the Nucleophile of the active site. A disulfide bridge links C100 with C201. G124 provides a ligand contact to ATP. The interaction with tRNA stretch occupies residues 151-153 (KDQ). Residue C201 is the Cysteine persulfide intermediate of the active site. The segment at 317 to 318 (RY) is interaction with tRNA.

It belongs to the MnmA/TRMU family.

The protein localises to the cytoplasm. The catalysed reaction is S-sulfanyl-L-cysteinyl-[protein] + uridine(34) in tRNA + AH2 + ATP = 2-thiouridine(34) in tRNA + L-cysteinyl-[protein] + A + AMP + diphosphate + H(+). Functionally, catalyzes the 2-thiolation of uridine at the wobble position (U34) of tRNA, leading to the formation of s(2)U34. The polypeptide is tRNA-specific 2-thiouridylase MnmA (Herminiimonas arsenicoxydans).